We begin with the raw amino-acid sequence, 1392 residues long: DNA-directed RNA polymerase subunit beta'' (1392 aa).

Zn(2+) contacts are provided by Cys224, Cys295, Cys302, and Cys305.

The protein belongs to the RNA polymerase beta' chain family. RpoC2 subfamily. In terms of assembly, in plastids the minimal PEP RNA polymerase catalytic core is composed of four subunits: alpha, beta, beta', and beta''. When a (nuclear-encoded) sigma factor is associated with the core the holoenzyme is formed, which can initiate transcription. The cofactor is Zn(2+).

The protein resides in the plastid. It is found in the chloroplast. The enzyme catalyses RNA(n) + a ribonucleoside 5'-triphosphate = RNA(n+1) + diphosphate. Functionally, DNA-dependent RNA polymerase catalyzes the transcription of DNA into RNA using the four ribonucleoside triphosphates as substrates. In Eucalyptus globulus subsp. globulus (Tasmanian blue gum), this protein is DNA-directed RNA polymerase subunit beta''.